Reading from the N-terminus, the 321-residue chain is NADPH-dependent codeinone reductase 1-4 (321 aa).

NADPH contacts are provided by threonine 27 and aspartate 51. Catalysis depends on proton donor residues tyrosine 56 and histidine 119. Position 119 (histidine 119) interacts with substrate. Residues serine 165, glutamine 187, serine 214, leucine 216, serine 264, and arginine 269 each contribute to the NADPH site. The segment at serine 299 to aspartate 321 is disordered.

This sequence belongs to the aldo/keto reductase family. Latex secreting cells (laticifer cells). Expressed constitutively in all organs with highest levels in capsules. Restricted to the parietal region of sieve elements adjacent or proximal to laticifers in roots, stems, leaves and carpels.

It localises to the cytoplasm. The protein localises to the cytosol. It catalyses the reaction codeine + NADP(+) = codeinone + NADPH + H(+). The catalysed reaction is neopine + NADP(+) = neopinone + NADPH + H(+). It carries out the reaction morphine + NADP(+) = morphinone + NADPH + H(+). The enzyme catalyses neomorphine + NADP(+) = neomorphinone + NADPH + H(+). Its pathway is alkaloid biosynthesis; morphine biosynthesis. NADPH-dependent codeinone reductase involved in biosynthesis of morphinan-type benzylisoquinoline and opiate alkaloids natural products. Reduces codeinone to codeine in the penultimate step in morphine biosynthesis. Can use morphinone, hydrocodone and hydromorphone as substrate during reductive reaction with NADPH as cofactor, and morphine and dihydrocodeine as substrate during oxidative reaction with NADP as cofactor. Converts morphinone to morphine, and neomorphinone to neomorphine. Reduces irreversibly neopinone, a spontaneous isomer of codeinone, to neopine; in planta, neopine levels are limited to low levels. The protein is NADPH-dependent codeinone reductase 1-4 of Papaver somniferum (Opium poppy).